Reading from the N-terminus, the 308-residue chain is Putative transposon Ty5-1 protein YCL074W (308 aa).

This chain is Putative transposon Ty5-1 protein YCL074W (TY5A), found in Saccharomyces cerevisiae (strain ATCC 204508 / S288c) (Baker's yeast).